A 243-amino-acid polypeptide reads, in one-letter code: Small ribosomal subunit protein uS2 (243 aa).

The protein belongs to the universal ribosomal protein uS2 family.

The sequence is that of Small ribosomal subunit protein uS2 from Aliivibrio salmonicida (strain LFI1238) (Vibrio salmonicida (strain LFI1238)).